Here is an 89-residue protein sequence, read N- to C-terminus: Large ribosomal subunit protein uL23cz/uL23cy (89 aa).

Belongs to the universal ribosomal protein uL23 family. As to quaternary structure, part of the 50S ribosomal subunit.

Its subcellular location is the plastid. It is found in the chloroplast. In terms of biological role, binds to 23S rRNA. This Calycanthus floridus var. glaucus (Eastern sweetshrub) protein is Large ribosomal subunit protein uL23cz/uL23cy (rpl23-A).